Reading from the N-terminus, the 499-residue chain is GTPase Der (499 aa).

EngA-type G domains lie at 3-166 and 213-386; these read PVVA…LETL and IKFA…QSAT. GTP contacts are provided by residues 9–16, 56–60, 118–121, 219–226, 266–270, and 331–334; these read GRPNVGKS, DTGGI, NKTD, DTAGV, and NKWD. The region spanning 387–471 is the KH-like domain; that stretch reads RRTSTAMLTR…PVRVEFQESA (85 aa).

Belongs to the TRAFAC class TrmE-Era-EngA-EngB-Septin-like GTPase superfamily. EngA (Der) GTPase family. Associates with the 50S ribosomal subunit.

In terms of biological role, GTPase that plays an essential role in the late steps of ribosome biogenesis. This is GTPase Der from Aeromonas hydrophila subsp. hydrophila (strain ATCC 7966 / DSM 30187 / BCRC 13018 / CCUG 14551 / JCM 1027 / KCTC 2358 / NCIMB 9240 / NCTC 8049).